The sequence spans 178 residues: Large ribosomal subunit protein uL6 (178 aa).

It belongs to the universal ribosomal protein uL6 family. In terms of assembly, part of the 50S ribosomal subunit.

This protein binds to the 23S rRNA, and is important in its secondary structure. It is located near the subunit interface in the base of the L7/L12 stalk, and near the tRNA binding site of the peptidyltransferase center. In Oenococcus oeni (strain ATCC BAA-331 / PSU-1), this protein is Large ribosomal subunit protein uL6.